Reading from the N-terminus, the 195-residue chain is ALK and LTK ligand 2b (195 aa).

Disulfide bonds link cysteine 156–cysteine 192 and cysteine 170–cysteine 179.

This sequence belongs to the ALKAL family. Homodimer. In terms of tissue distribution, highly expressed in the swim bladder and single cells of unknown identity in the head.

The protein resides in the secreted. It localises to the cell membrane. In terms of biological role, cytokine that acts as a physiological ligand for receptor tyrosine kinases LTK and ALK. Required for neural crest cell differentiation and iridophore development during embryonic iridophore development and adult stripe development by acting as a receptor for LTK. Also required for iridophore formation in the adult eye. In Danio rerio (Zebrafish), this protein is ALK and LTK ligand 2b.